A 435-amino-acid chain; its full sequence is Tyrosine-protein phosphatase non-receptor type 1 (435 aa).

Residue Met-1 is modified to N-acetylmethionine. The region spanning 3–277 (MEKEFEQIDK…RFSYLAVIEG (275 aa)) is the Tyrosine-protein phosphatase domain. The residue at position 20 (Tyr-20) is a Phosphotyrosine. Ser-50 carries the phosphoserine; by PKB/AKT1, CLK1 and CLK2 modification. Tyr-66 carries the post-translational modification Phosphotyrosine; by EGFR. Substrate contacts are provided by residues Asp-181 and 215-221 (CSAGIGR). Cys-215 serves as the catalytic Phosphocysteine intermediate. Residue Cys-215 is modified to Cysteine persulfide; alternate. Residue Cys-215 is modified to Cysteine sulfenic acid (-SOH); alternate. Cys-215 carries the cysteine sulfinic acid (-SO2H); alternate modification. An S-nitrosocysteine; in reversibly inhibited form modification is found at Cys-215. Residues 215-216 (CS) constitute a cross-link (n,N-(cysteine-1,S-diyl)serine (Cys-Ser); in inhibited form). Residues Ser-242 and Ser-243 each carry the phosphoserine; by CLK1 and CLK2 modification. Gln-262 lines the substrate pocket. Residues 338–351 (TQEDKDCPIKEEKG) are compositionally biased toward basic and acidic residues. Residues 338 to 359 (TQEDKDCPIKEEKGSPLNAAPY) form a disordered region. Ser-352, Ser-363, and Ser-365 each carry phosphoserine. A Phosphothreonine modification is found at Thr-368. Residue Ser-378 is modified to Phosphoserine; by PKC. The segment at 378–398 (SLRGAQAASPAKGEPSLPEKD) is disordered. Ser-386 carries the phosphoserine; by CDK1 modification.

It belongs to the protein-tyrosine phosphatase family. Non-receptor class 1 subfamily. In terms of assembly, interacts with EPHA3 (phosphorylated); dephosphorylates EPHA3 and may regulate its trafficking and function. Interacts with MET. Interacts with NCK1. Oxidized on Cys-215; the Cys-SOH formed in response to redox signaling reacts with the alpha-amido of the following residue to form a sulfenamide cross-link, triggering a conformational change that inhibits substrate binding and activity. The active site can be restored by reduction. Post-translationally, ser-50 is the major site of phosphorylation as compared to Ser-242 and Ser-243. Activated by phosphorylation at Ser-50. In terms of processing, S-nitrosylation of Cys-215 inactivates the enzyme activity. Sulfhydration at Cys-215 following endoplasmic reticulum stress inactivates the enzyme activity, promoting EIF2AK3/PERK activity. As to expression, expressed in keratinocytes (at protein level).

The protein localises to the endoplasmic reticulum membrane. The enzyme catalyses O-phospho-L-tyrosyl-[protein] + H2O = L-tyrosyl-[protein] + phosphate. Its function is as follows. Tyrosine-protein phosphatase which acts as a regulator of endoplasmic reticulum unfolded protein response. Mediates dephosphorylation of EIF2AK3/PERK; inactivating the protein kinase activity of EIF2AK3/PERK. May play an important role in CKII- and p60c-src-induced signal transduction cascades. May regulate the EFNA5-EPHA3 signaling pathway which modulates cell reorganization and cell-cell repulsion. May also regulate the hepatocyte growth factor receptor signaling pathway through dephosphorylation of MET. This is Tyrosine-protein phosphatase non-receptor type 1 (PTPN1) from Homo sapiens (Human).